Reading from the N-terminus, the 224-residue chain is uncharacterized protein (224 aa).

This is an uncharacterized protein from Listeria innocua serovar 6a (strain ATCC BAA-680 / CLIP 11262).